The primary structure comprises 84 residues: Putative membrane protein insertion efficiency factor (84 aa).

This sequence belongs to the UPF0161 family.

It is found in the cell inner membrane. Functionally, could be involved in insertion of integral membrane proteins into the membrane. This is Putative membrane protein insertion efficiency factor from Shewanella oneidensis (strain ATCC 700550 / JCM 31522 / CIP 106686 / LMG 19005 / NCIMB 14063 / MR-1).